Consider the following 305-residue polypeptide: Ribosomal RNA small subunit methyltransferase H (305 aa).

Residues 33-35 (GGY), D51, F78, D96, and Q103 each bind S-adenosyl-L-methionine.

It belongs to the methyltransferase superfamily. RsmH family.

It is found in the cytoplasm. It catalyses the reaction cytidine(1402) in 16S rRNA + S-adenosyl-L-methionine = N(4)-methylcytidine(1402) in 16S rRNA + S-adenosyl-L-homocysteine + H(+). In terms of biological role, specifically methylates the N4 position of cytidine in position 1402 (C1402) of 16S rRNA. This chain is Ribosomal RNA small subunit methyltransferase H, found in Rickettsia bellii (strain RML369-C).